The following is a 166-amino-acid chain: Packaging efficiency factor P6 (166 aa).

The tract at residues 134–166 (ILPESAGDQQEAEPVPSVGDQQETAPRKRFRAI) is disordered.

As to quaternary structure, heterodimer of P6 and P9; further multimerizes as hexamers of heterodimers. Part of the dodecameric portal complex that is composed of the packaging efficiency factor P6, the DNA packaging ATPase P9, and the internal heterododecamer P20/P22 which spans the virion inner membrane.

It localises to the virion. Together with the packaging ATPase P9, forms the external part of the portal vertex that is embeded in the capsid and which plays critical roles in genome packaging and genome ejection. Both proteins multimerize as a single ring-shaped heterdodecamer arranged around a central channel. The chain is Packaging efficiency factor P6 (VI) from Acinetobacter calcoaceticus (Arthrobacter siderocapsulatus).